Here is a 116-residue protein sequence, read N- to C-terminus: NADH-ubiquinone oxidoreductase chain 3 (116 aa).

3 consecutive transmembrane segments (helical) span residues 3–23, 56–76, and 88–108; these read LFAT…LVSF, FFLV…LLPL, and TLFW…YEWA.

Belongs to the complex I subunit 3 family. In terms of assembly, core subunit of respiratory chain NADH dehydrogenase (Complex I) which is composed of 45 different subunits.

The protein localises to the mitochondrion inner membrane. The catalysed reaction is a ubiquinone + NADH + 5 H(+)(in) = a ubiquinol + NAD(+) + 4 H(+)(out). In terms of biological role, core subunit of the mitochondrial membrane respiratory chain NADH dehydrogenase (Complex I) which catalyzes electron transfer from NADH through the respiratory chain, using ubiquinone as an electron acceptor. Essential for the catalytic activity of complex I. The chain is NADH-ubiquinone oxidoreductase chain 3 (mt-nd3) from Danio rerio (Zebrafish).